The chain runs to 97 residues: Large ribosomal subunit protein uL23 (97 aa).

The protein belongs to the universal ribosomal protein uL23 family. As to quaternary structure, part of the 50S ribosomal subunit. Contacts protein L29, and trigger factor when it is bound to the ribosome.

One of the early assembly proteins it binds 23S rRNA. One of the proteins that surrounds the polypeptide exit tunnel on the outside of the ribosome. Forms the main docking site for trigger factor binding to the ribosome. The chain is Large ribosomal subunit protein uL23 from Lactiplantibacillus plantarum (strain ATCC BAA-793 / NCIMB 8826 / WCFS1) (Lactobacillus plantarum).